The primary structure comprises 392 residues: Formate-dependent phosphoribosylglycinamide formyltransferase (392 aa).

N(1)-(5-phospho-beta-D-ribosyl)glycinamide is bound by residues 22-23 and Glu82; that span reads EL. ATP-binding positions include Arg114, Lys155, 160–165, 195–198, and Glu203; these read SSGKGQ and EGVV. One can recognise an ATP-grasp domain in the interval 119 to 308; that stretch reads RLAAEELQLP…EFALHVRAFL (190 aa). Mg(2+) is bound by residues Glu267 and Glu279. N(1)-(5-phospho-beta-D-ribosyl)glycinamide-binding positions include Asp286, Lys355, and 362–363; that span reads RR.

The protein belongs to the PurK/PurT family. In terms of assembly, homodimer.

It catalyses the reaction N(1)-(5-phospho-beta-D-ribosyl)glycinamide + formate + ATP = N(2)-formyl-N(1)-(5-phospho-beta-D-ribosyl)glycinamide + ADP + phosphate + H(+). It functions in the pathway purine metabolism; IMP biosynthesis via de novo pathway; N(2)-formyl-N(1)-(5-phospho-D-ribosyl)glycinamide from N(1)-(5-phospho-D-ribosyl)glycinamide (formate route): step 1/1. Involved in the de novo purine biosynthesis. Catalyzes the transfer of formate to 5-phospho-ribosyl-glycinamide (GAR), producing 5-phospho-ribosyl-N-formylglycinamide (FGAR). Formate is provided by PurU via hydrolysis of 10-formyl-tetrahydrofolate. In Shigella boydii serotype 4 (strain Sb227), this protein is Formate-dependent phosphoribosylglycinamide formyltransferase.